A 349-amino-acid polypeptide reads, in one-letter code: Core protein VP7 (349 aa).

Residue asparagine 287 is glycosylated (N-linked (GlcNAc...) asparagine; by host).

The protein belongs to the orbivirus VP7 family. As to quaternary structure, homotrimer that assemble in a complex of 260 capsomers on an inner scaffold composed of VP3.

It is found in the virion. Its function is as follows. The VP7 protein is one of the five proteins (with VP1, VP3, VP4, and VP6) which form the inner capsid of the virus. The chain is Core protein VP7 (Segment-7) from Antilocapra americana (Pronghorn).